Consider the following 341-residue polypeptide: MAEFFATNLWPLLVVIGQSVLLLVILLIAIAYILLADRKIWAAVQIRRGPNVVGPWGLLQSFADLLKFVLKEPTIPDGANKGLFLLAPLVTCVLALAAWAVIPVNAGWVIADINVGVLYILAVSSLSVYGIIMAGWSSNSKYPFLAALRSAAQMVSYEVSIGFVVICVLLCVGSLNLTAIVEAQDGKWGMLGWYWLPLFPMFVVFYVSALAETNRPPFDLVEAESELVAGFMVEYSSTPYLLFMLGEYVAIVTMCAMGTILFLGGWLPPVPYAPFTWVPGIVWFSLKLLFMFFLFAMAKAIVPRYRYDQLMRLGWKVFLPLSLAMVVIVASVLQFADLAPK.

8 helical membrane-spanning segments follow: residues 13 to 33 (LVVI…IAYI), 82 to 102 (GLFL…WAVI), 115 to 135 (VGVL…IMAG), 161 to 181 (IGFV…TAIV), 190 to 210 (MLGW…VSAL), 248 to 268 (YVAI…GWLP), 277 to 297 (WVPG…LFAM), and 313 to 333 (LGWK…ASVL).

It belongs to the complex I subunit 1 family. In terms of assembly, NDH-1 is composed of 14 different subunits. Subunits NuoA, H, J, K, L, M, N constitute the membrane sector of the complex.

The protein resides in the cell inner membrane. It carries out the reaction a quinone + NADH + 5 H(+)(in) = a quinol + NAD(+) + 4 H(+)(out). In terms of biological role, NDH-1 shuttles electrons from NADH, via FMN and iron-sulfur (Fe-S) centers, to quinones in the respiratory chain. The immediate electron acceptor for the enzyme in this species is believed to be ubiquinone. Couples the redox reaction to proton translocation (for every two electrons transferred, four hydrogen ions are translocated across the cytoplasmic membrane), and thus conserves the redox energy in a proton gradient. This subunit may bind ubiquinone. The polypeptide is NADH-quinone oxidoreductase subunit H 1 (Rhodopseudomonas palustris (strain ATCC BAA-98 / CGA009)).